The primary structure comprises 215 residues: ATP phosphoribosyltransferase (215 aa).

It belongs to the ATP phosphoribosyltransferase family. Short subfamily. As to quaternary structure, heteromultimer composed of HisG and HisZ subunits.

It is found in the cytoplasm. It carries out the reaction 1-(5-phospho-beta-D-ribosyl)-ATP + diphosphate = 5-phospho-alpha-D-ribose 1-diphosphate + ATP. It participates in amino-acid biosynthesis; L-histidine biosynthesis; L-histidine from 5-phospho-alpha-D-ribose 1-diphosphate: step 1/9. Functionally, catalyzes the condensation of ATP and 5-phosphoribose 1-diphosphate to form N'-(5'-phosphoribosyl)-ATP (PR-ATP). Has a crucial role in the pathway because the rate of histidine biosynthesis seems to be controlled primarily by regulation of HisG enzymatic activity. In Prochlorococcus marinus subsp. pastoris (strain CCMP1986 / NIES-2087 / MED4), this protein is ATP phosphoribosyltransferase.